Here is a 144-residue protein sequence, read N- to C-terminus: L-fucose mutarotase (144 aa).

Residue histidine 22 is the Proton donor of the active site. Residues aspartate 30, arginine 109, and 131–133 (YGN) contribute to the substrate site.

This sequence belongs to the RbsD / FucU family. FucU mutarotase subfamily. In terms of assembly, homodecamer.

The protein localises to the cytoplasm. The enzyme catalyses alpha-L-fucose = beta-L-fucose. It participates in carbohydrate metabolism; L-fucose metabolism. In terms of biological role, involved in the anomeric conversion of L-fucose. This is L-fucose mutarotase from Haemophilus influenzae (strain PittEE).